The primary structure comprises 331 residues: DNA polymerase IV (331 aa).

In terms of domain architecture, UmuC spans 1 to 174 (FFAAVEMRDN…LPLAKIPGVG (174 aa)). D92 contributes to the Mg(2+) binding site. E93 is a catalytic residue.

It belongs to the DNA polymerase type-Y family. As to quaternary structure, monomer. The cofactor is Mg(2+).

It localises to the cytoplasm. The enzyme catalyses DNA(n) + a 2'-deoxyribonucleoside 5'-triphosphate = DNA(n+1) + diphosphate. Functionally, poorly processive, error-prone DNA polymerase involved in untargeted mutagenesis. Copies undamaged DNA at stalled replication forks, which arise in vivo from mismatched or misaligned primer ends. These misaligned primers can be extended by PolIV. Exhibits no 3'-5' exonuclease (proofreading) activity. May be involved in translesional synthesis, in conjunction with the beta clamp from PolIII. The protein is DNA polymerase IV of Escherichia fergusonii.